Here is a 266-residue protein sequence, read N- to C-terminus: Large ribosomal subunit protein uL2m (266 aa).

Belongs to the universal ribosomal protein uL2 family.

Its subcellular location is the mitochondrion. The chain is Large ribosomal subunit protein uL2m (mrpl2) from Dictyostelium discoideum (Social amoeba).